The chain runs to 329 residues: Glyceraldehyde-3-phosphate dehydrogenase 1 (329 aa).

NAD(+)-binding positions include 11–12 (RI), D33, and K78. D-glyceraldehyde 3-phosphate contacts are provided by residues 148-150 (SCT), T179, 208-209 (TG), and R231. C149 functions as the Nucleophile in the catalytic mechanism. N313 lines the NAD(+) pocket.

The protein belongs to the glyceraldehyde-3-phosphate dehydrogenase family. As to quaternary structure, homotetramer.

Its subcellular location is the cytoplasm. It catalyses the reaction D-glyceraldehyde 3-phosphate + phosphate + NAD(+) = (2R)-3-phospho-glyceroyl phosphate + NADH + H(+). Its pathway is carbohydrate degradation; glycolysis; pyruvate from D-glyceraldehyde 3-phosphate: step 1/5. This chain is Glyceraldehyde-3-phosphate dehydrogenase 1 (GAP1), found in Kluyveromyces lactis (strain ATCC 8585 / CBS 2359 / DSM 70799 / NBRC 1267 / NRRL Y-1140 / WM37) (Yeast).